Consider the following 469-residue polypeptide: Ribulose bisphosphate carboxylase large chain (469 aa).

Lysine 8 carries the N6,N6,N6-trimethyllysine modification. Substrate contacts are provided by asparagine 117 and threonine 167. The Proton acceptor role is filled by lysine 169. Lysine 171 contributes to the substrate binding site. Mg(2+) contacts are provided by lysine 195, aspartate 197, and glutamate 198. An N6-carboxylysine modification is found at lysine 195. Histidine 288 acts as the Proton acceptor in catalysis. Residues arginine 289, histidine 321, and serine 373 each contribute to the substrate site.

The protein belongs to the RuBisCO large chain family. Type I subfamily. In terms of assembly, heterohexadecamer of 8 large chains and 8 small chains; disulfide-linked. The disulfide link is formed within the large subunit homodimers. Requires Mg(2+) as cofactor. In terms of processing, the disulfide bond which can form in the large chain dimeric partners within the hexadecamer appears to be associated with oxidative stress and protein turnover.

It localises to the plastid. It is found in the chloroplast. It catalyses the reaction 2 (2R)-3-phosphoglycerate + 2 H(+) = D-ribulose 1,5-bisphosphate + CO2 + H2O. It carries out the reaction D-ribulose 1,5-bisphosphate + O2 = 2-phosphoglycolate + (2R)-3-phosphoglycerate + 2 H(+). RuBisCO catalyzes two reactions: the carboxylation of D-ribulose 1,5-bisphosphate, the primary event in carbon dioxide fixation, as well as the oxidative fragmentation of the pentose substrate in the photorespiration process. Both reactions occur simultaneously and in competition at the same active site. The polypeptide is Ribulose bisphosphate carboxylase large chain (Akania bidwillii (Turnipwood)).